We begin with the raw amino-acid sequence, 135 residues long: Class I hydrophobin 15 (135 aa).

An N-terminal signal peptide occupies residues 1 to 21 (MFAKSATIAIVLAALAGFSAA). 4 disulfide bridges follow: Cys-50–Cys-113, Cys-57–Cys-107, Cys-58–Cys-97, and Cys-114–Cys-127. A glycan (N-linked (GlcNAc...) asparagine) is linked at Asn-131.

This sequence belongs to the fungal hydrophobin family. Self-assembles to form functional amyloid fibrils called rodlets. Self-assembly into fibrillar rodlets occurs spontaneously at hydrophobic:hydrophilic interfaces and the rodlets further associate laterally to form amphipathic monolayers.

It localises to the secreted. Its subcellular location is the cell wall. Its function is as follows. Aerial growth, conidiation, and dispersal of filamentous fungi in the environment rely upon a capability of their secreting small amphipathic proteins called hydrophobins (HPBs) with low sequence identity. Class I can self-assemble into an outermost layer of rodlet bundles on aerial cell surfaces, conferring cellular hydrophobicity that supports fungal growth, development and dispersal; whereas Class II form highly ordered films at water-air interfaces through intermolecular interactions but contribute nothing to the rodlet structure. This chain is Class I hydrophobin 15, found in Pleurotus ostreatus (strain PC15) (Oyster mushroom).